Here is an 84-residue protein sequence, read N- to C-terminus: Large ribosomal subunit protein bL28 (84 aa).

Belongs to the bacterial ribosomal protein bL28 family.

The protein is Large ribosomal subunit protein bL28 of Deinococcus geothermalis (strain DSM 11300 / CIP 105573 / AG-3a).